Consider the following 337-residue polypeptide: GTP 3',8-cyclase (337 aa).

Residues 1–226 (MNRVDYLRIS…REKIRQKWGL (226 aa)) enclose the Radical SAM core domain. Arginine 8 contacts GTP. [4Fe-4S] cluster contacts are provided by cysteine 15 and cysteine 19. Tyrosine 21 provides a ligand contact to S-adenosyl-L-methionine. Residue cysteine 22 coordinates [4Fe-4S] cluster. Residue arginine 60 coordinates GTP. Glycine 64 contributes to the S-adenosyl-L-methionine binding site. Threonine 91 is a GTP binding site. Serine 115 is an S-adenosyl-L-methionine binding site. Lysine 155 lines the GTP pocket. Methionine 189 is a binding site for S-adenosyl-L-methionine. Positions 260 and 263 each coordinate [4Fe-4S] cluster. 265-267 (RMR) provides a ligand contact to GTP. Cysteine 277 serves as a coordination point for [4Fe-4S] cluster.

It belongs to the radical SAM superfamily. MoaA family. Monomer and homodimer. The cofactor is [4Fe-4S] cluster.

The catalysed reaction is GTP + AH2 + S-adenosyl-L-methionine = (8S)-3',8-cyclo-7,8-dihydroguanosine 5'-triphosphate + 5'-deoxyadenosine + L-methionine + A + H(+). It functions in the pathway cofactor biosynthesis; molybdopterin biosynthesis. Catalyzes the cyclization of GTP to (8S)-3',8-cyclo-7,8-dihydroguanosine 5'-triphosphate. The sequence is that of GTP 3',8-cyclase from Crocosphaera subtropica (strain ATCC 51142 / BH68) (Cyanothece sp. (strain ATCC 51142)).